Here is a 290-residue protein sequence, read N- to C-terminus: ATP synthase gamma chain (290 aa).

This sequence belongs to the ATPase gamma chain family. F-type ATPases have 2 components, CF(1) - the catalytic core - and CF(0) - the membrane proton channel. CF(1) has five subunits: alpha(3), beta(3), gamma(1), delta(1), epsilon(1). CF(0) has three main subunits: a, b and c.

Its subcellular location is the cell inner membrane. Its function is as follows. Produces ATP from ADP in the presence of a proton gradient across the membrane. The gamma chain is believed to be important in regulating ATPase activity and the flow of protons through the CF(0) complex. The sequence is that of ATP synthase gamma chain from Bacteroides fragilis (strain YCH46).